Reading from the N-terminus, the 387-residue chain is MTVGLGMPQPPAPTLAPRRATRQLMVGNVGVGSDHPVSVQSMCTTKTHDVNSTLQQIAELTAAGCDIVRVACPRQEDADALAEIARHSQIPVVADIHFQPRYIFAAIDAGCAAVRVNPGNIKEFDGRVGEVAKAAGAAGIPIRIGVNAGSLDKRFMEKYGKATPEALVESALWEASLFEEHGFGDIKISVKHNDPVVMVAAYELLAARCDYPLHLGVTEAGPAFQGTIKSAVAFGALLSRGIGDTIRVSLSAPPVEEVKVGNQVLESLNLRPRSLEIVSCPSCGRAQVDVYTLANEVTAGLDGLDVPLRVAVMGCVVNGPGEAREADLGVASGNGKGQIFVRGEVIKTVPEAQIVETLIEEAMRLAAEMGEQAPGATPSGSPIVTVS.

Positions 280, 283, 315, and 322 each coordinate [4Fe-4S] cluster.

Belongs to the IspG family. [4Fe-4S] cluster serves as cofactor.

The enzyme catalyses (2E)-4-hydroxy-3-methylbut-2-enyl diphosphate + oxidized [flavodoxin] + H2O + 2 H(+) = 2-C-methyl-D-erythritol 2,4-cyclic diphosphate + reduced [flavodoxin]. Its pathway is isoprenoid biosynthesis; isopentenyl diphosphate biosynthesis via DXP pathway; isopentenyl diphosphate from 1-deoxy-D-xylulose 5-phosphate: step 5/6. Converts 2C-methyl-D-erythritol 2,4-cyclodiphosphate (ME-2,4cPP) into 1-hydroxy-2-methyl-2-(E)-butenyl 4-diphosphate. The chain is 4-hydroxy-3-methylbut-2-en-1-yl diphosphate synthase (flavodoxin) from Mycobacterium bovis (strain ATCC BAA-935 / AF2122/97).